Here is a 355-residue protein sequence, read N- to C-terminus: Iron deficiency-induced protein A (355 aa).

A signal peptide (tat-type signal) is located at residues 1 to 34 (MEKVGRRVFLGMGAAATAYVTHHLWNQNAESSYA). Residues H49, Y50, Y180, Y236, and Y237 each coordinate Fe cation.

This sequence belongs to the bacterial solute-binding protein 1 family. Post-translationally, predicted to be exported by the Tat system. The position of the signal peptide cleavage has not been experimentally proven.

It is found in the cellular thylakoid membrane. Plays an important role in protecting the acceptor side of photosystem II (PSII) against oxidative damage, especially under iron-limiting growth conditions. Functionally, may also be part of a periplasmic ABC transporter complex involved in iron import. This chain is Iron deficiency-induced protein A (idiA), found in Thermosynechococcus vestitus (strain NIES-2133 / IAM M-273 / BP-1).